The following is a 264-amino-acid chain: tRNA pseudouridine synthase A (264 aa).

The active-site Nucleophile is the aspartate 51. Substrate is bound at residue tyrosine 109.

This sequence belongs to the tRNA pseudouridine synthase TruA family. Homodimer.

It carries out the reaction uridine(38/39/40) in tRNA = pseudouridine(38/39/40) in tRNA. In terms of biological role, formation of pseudouridine at positions 38, 39 and 40 in the anticodon stem and loop of transfer RNAs. The sequence is that of tRNA pseudouridine synthase A from Vibrio campbellii (strain ATCC BAA-1116).